We begin with the raw amino-acid sequence, 186 residues long: Superoxide dismutase [Cu-Zn] (186 aa).

The first 20 residues, 1 to 20, serve as a signal peptide directing secretion; sequence MKKTVLALMFSCGMVASAFA. Residues histidine 79, histidine 81, and histidine 104 each coordinate Cu cation. An intrachain disulfide couples cysteine 86 to cysteine 182. The Zn(2+) site is built by histidine 104, histidine 113, histidine 122, and aspartate 125. Histidine 160 serves as a coordination point for Cu cation.

It belongs to the Cu-Zn superoxide dismutase family. As to quaternary structure, homodimer. The cofactor is Cu cation. Zn(2+) is required as a cofactor.

The protein localises to the periplasm. The enzyme catalyses 2 superoxide + 2 H(+) = H2O2 + O2. Functionally, destroys radicals which are normally produced within the cells and which are toxic to biological systems. This Pasteurella multocida (strain Pm70) protein is Superoxide dismutase [Cu-Zn] (sodC).